We begin with the raw amino-acid sequence, 184 residues long: Peptidyl-tRNA hydrolase (184 aa).

Tyrosine 14 is a tRNA binding site. The active-site Proton acceptor is the histidine 19. Residues phenylalanine 64, asparagine 66, and asparagine 112 each coordinate tRNA.

This sequence belongs to the PTH family. As to quaternary structure, monomer.

It localises to the cytoplasm. The catalysed reaction is an N-acyl-L-alpha-aminoacyl-tRNA + H2O = an N-acyl-L-amino acid + a tRNA + H(+). Its function is as follows. Hydrolyzes ribosome-free peptidyl-tRNAs (with 1 or more amino acids incorporated), which drop off the ribosome during protein synthesis, or as a result of ribosome stalling. Catalyzes the release of premature peptidyl moieties from peptidyl-tRNA molecules trapped in stalled 50S ribosomal subunits, and thus maintains levels of free tRNAs and 50S ribosomes. The protein is Peptidyl-tRNA hydrolase of Listeria innocua serovar 6a (strain ATCC BAA-680 / CLIP 11262).